Consider the following 716-residue polypeptide: Macrophage-expressed gene 1 protein (716 aa).

The N-terminal stretch at 1–20 (MNNFRATILFWAVAAWVTSG) is a signal peptide. Residues 30 to 345 (GVQKCKNALK…TAVKRYYTFN (316 aa)) form the MACPF domain. The cysteines at positions 34 and 70 are disulfide-linked. A run of 2 beta stranded transmembrane segments spans residues 113 to 120 (YSINTELS) and 127 to 132 (GKFSTE). N-linked (GlcNAc...) asparagine glycosylation is found at Asn168 and Asn185. A run of 2 beta stranded transmembrane segments spans residues 235–244 (AVTASAGLAF) and 248–256 (VNFKFEENY). N-linked (GlcNAc...) asparagine glycosylation occurs at Asn269. Cys350 and Cys369 are joined by a disulfide. Residue Asn375 is glycosylated (N-linked (GlcNAc...) asparagine). Intrachain disulfides connect Cys385–Cys397, Cys435–Cys449, Cys439–Cys445, Cys534–Cys572, and Cys557–Cys577. The interval 413–656 (PSGYSPVRLL…GDGGGLSGGA (244 aa)) is P2. A helical transmembrane segment spans residues 656-676 (AAAGVTLGVTTILAVVITLAI). Residues 693–716 (RQSLVPGTAATGDTTYQEQGQSPA) are disordered. Residues 703-716 (TGDTTYQEQGQSPA) show a composition bias toward polar residues.

Belongs to the MPEG1 family. As to quaternary structure, homooligomer; predominantly forms a homooligomeric arc-shaped pore complex instead of complete rings of 16 subunits. Post-translationally, proteolytically processed in two steps to generate the Macrophage-expressed gene 1 protein, processed form: cleaved by trypsin in proximity of the helical transmembrane domain releases the ectodomain into the lysosomal lumen to orient the pore-forming domain toward the endogenous membranes, and processed by the asparagine endopeptidase (LGMN). Proteolytic processing in antigen-containing vesicles is pH-dependent. In terms of processing, monoubiquitinated in response to bacterial infection; ubiquitination is required for vesicular localization and antibacterial activity and can be blocked by bacterial cell cycle inhibiting factor (cif).

It is found in the cytoplasmic vesicle membrane. The protein localises to the cytoplasmic vesicle. It localises to the phagosome membrane. Forms arc- and ring-shaped pre-pores on top of the membrane at neutral to slightly acidic pH conditions and converts to pores upon acidification. Undergoes transition from the pre-pore to the pore in a processive clockwise hand-over-hand process. In the pore state, 2 alpha-helical regions refold into transmembrane hairpins (TMH1 and TMH2) in each protomer that form in the ensemble complex giant beta-barrel transmembrane pores. In terms of biological role, pore-forming protein involved in both innate and adaptive immunity. Plays a central role in antigen cross-presentation in dendritic cells by forming a pore in antigen-containing compartments, thereby promoting delivery of antigens for cross-presentation. Also involved in innate immune response following bacterial infection; shows antibacterial activity against a wide spectrum of Gram-positive, Gram-negative and acid-fast bacteria. Reduces the viability of the intracytosolic pathogen L.monocytogenes by inhibiting acidification of the phagocytic vacuole of host cells which restricts bacterial translocation from the vacuole to the cytosol. Required for the antibacterial activity of reactive oxygen species and nitric oxide. Pore-forming protein that plays a central role in antigen cross-presentation in dendritic cells by mediating delivery of antigens for cross-presentation. Dendritic cells bridge innate and adaptive immunity by capturing exogenous antigens on MHC class-I molecules and presenting them to naive CD8(+) T-cells. Acts by forming a pore in antigen-containing compartments, promoting the release of antigens into the cytosol, enabling generation of MHCI:peptide complexes and T-cell priming. This chain is Macrophage-expressed gene 1 protein (MPEG1), found in Pongo abelii (Sumatran orangutan).